The chain runs to 186 residues: MASPAAASVRPPRPKKEPQTLVIPKNAAEEQKLKLERLMKNPDKAVPIPEKMNEWAPRAPPEFVRDVMGSSAGAGSGEFHVYRHLRRREYQRQDYMDAMAEKQKLDAEFQKRLEKNKIAAEEQTAKRRKKRQKLKEKKLLAKKMKLEQKKQKEEPSQCQEQHASSSDEASETEEEEEEPSVVIMGR.

The tract at residues 1 to 50 is interaction with EIF2AK2; sequence MASPAAASVRPPRPKKEPQTLVIPKNAAEEQKLKLERLMKNPDKAVPIPE. Positions 51-143 are required for RNA-binding; the sequence is KMNEWAPRAP…LKEKKLLAKK (93 aa). A coiled-coil region spans residues 91-178; it reads QRQDYMDAMA…ASETEEEEEE (88 aa). Basic and acidic residues predominate over residues 116 to 125; it reads NKIAAEEQTA. Residues 116 to 186 form a disordered region; that stretch reads NKIAAEEQTA…EEPSVVIMGR (71 aa). The interval 126-138 is required for nuclear localization; the sequence is KRRKKRQKLKEKK. The span at 126 to 143 shows a compositional bias: basic residues; sequence KRRKKRQKLKEKKLLAKK. The segment covering 144–155 has biased composition (basic and acidic residues); sequence MKLEQKKQKEEP. A compositionally biased stretch (acidic residues) spans 168–179; that stretch reads EASETEEEEEEP.

The protein belongs to the PRKRIP1 family. As to quaternary structure, component of the pre-catalytic and post-catalytic spliceosome complexes. Interacts with EIF2AK2. As to expression, broadly expressed, with highest levels in liver, kidney, brain and heart.

It is found in the nucleus. The protein localises to the nucleolus. Required for pre-mRNA splicing as component of the spliceosome. Binds double-stranded RNA. Inhibits EIF2AK2 kinase activity. The polypeptide is PRKR-interacting protein 1 (Prkrip1) (Mus musculus (Mouse)).